The following is a 162-amino-acid chain: Small ribosomal subunit protein uS12m (162 aa).

A mitochondrion-targeting transit peptide spans 1–37 (MIRFAQYARYPVISRLMKPTVISPFQAQAFSSSSVML).

This sequence belongs to the universal ribosomal protein uS12 family. As to quaternary structure, component of the mitochondrial small ribosomal subunit (mt-SSU). Mature yeast 74S mitochondrial ribosomes consist of a small (37S) and a large (54S) subunit. The 37S small subunit contains a 15S ribosomal RNA (15S mt-rRNA) and at least 32 different proteins. The 54S large subunit contains a 21S rRNA (21S mt-rRNA) and at least 45 different proteins. uS12m forms part of the decoding center of the mt-SSU.

It localises to the mitochondrion. Component of the mitochondrial ribosome (mitoribosome), a dedicated translation machinery responsible for the synthesis of mitochondrial genome-encoded proteins, including at least some of the essential transmembrane subunits of the mitochondrial respiratory chain. The mitoribosomes are attached to the mitochondrial inner membrane and translation products are cotranslationally integrated into the membrane. uS12m is required for respiratory growth. The sequence is that of Small ribosomal subunit protein uS12m from Schizosaccharomyces pombe (strain 972 / ATCC 24843) (Fission yeast).